The primary structure comprises 134 residues: ATP synthase epsilon chain (134 aa).

It belongs to the ATPase epsilon chain family. As to quaternary structure, F-type ATPases have 2 components, CF(1) - the catalytic core - and CF(0) - the membrane proton channel. CF(1) has five subunits: alpha(3), beta(3), gamma(1), delta(1), epsilon(1). CF(0) has three main subunits: a, b and c.

Its subcellular location is the cell inner membrane. In terms of biological role, produces ATP from ADP in the presence of a proton gradient across the membrane. The protein is ATP synthase epsilon chain of Sinorhizobium fredii (strain NBRC 101917 / NGR234).